Consider the following 488-residue polypeptide: GTPase Der (488 aa).

EngA-type G domains lie at 3 to 166 (PVVA…AEAM) and 199 to 372 (IKLA…DSAT). Residues 9-16 (GRPNVGKS), 56-60 (DTGGI), 118-121 (NKVD), 205-212 (GKPNVGKS), 252-256 (DTAGV), and 317-320 (NKWD) contribute to the GTP site. The region spanning 373 to 457 (RRVSTSMLTR…PIQLRFQEGD (85 aa)) is the KH-like domain. The tract at residues 469–488 (MSQERRRKRALSHIKDRKTK) is disordered. Positions 473–488 (RRRKRALSHIKDRKTK) are enriched in basic residues.

The protein belongs to the TRAFAC class TrmE-Era-EngA-EngB-Septin-like GTPase superfamily. EngA (Der) GTPase family. In terms of assembly, associates with the 50S ribosomal subunit.

GTPase that plays an essential role in the late steps of ribosome biogenesis. In Shewanella putrefaciens (strain CN-32 / ATCC BAA-453), this protein is GTPase Der.